Here is a 365-residue protein sequence, read N- to C-terminus: Hematopoietic SH2 domain-containing protein homolog (365 aa).

An SH2 domain is found at 34–125 (WFHGIISRKA…PYNELLTVAC (92 aa)). Disordered regions lie at residues 199–278 (QSTD…QQKP) and 335–365 (AEHP…APGY). Residues 257-277 (QQITPNTPNEGRTQQKNQQQK) show a composition bias toward polar residues.

In terms of biological role, may be an adapter protein involved in tyrosine kinase signaling. The chain is Hematopoietic SH2 domain-containing protein homolog (hsh2d) from Danio rerio (Zebrafish).